The primary structure comprises 252 residues: Trans-aconitate 2-methyltransferase (252 aa).

The protein belongs to the methyltransferase superfamily. Tam family.

The protein localises to the cytoplasm. It catalyses the reaction trans-aconitate + S-adenosyl-L-methionine = (E)-3-(methoxycarbonyl)pent-2-enedioate + S-adenosyl-L-homocysteine. Its function is as follows. Catalyzes the S-adenosylmethionine monomethyl esterification of trans-aconitate. In Escherichia coli O139:H28 (strain E24377A / ETEC), this protein is Trans-aconitate 2-methyltransferase.